Here is a 22-residue protein sequence, read N- to C-terminus: Motilin (22 aa).

Positions 1 to 22 (FVPIFTHSELQKIREKERNKGQ) are disordered. A compositionally biased stretch (basic and acidic residues) spans 9–22 (ELQKIREKERNKGQ).

This sequence belongs to the motilin family.

The protein localises to the secreted. Its function is as follows. Plays an important role in the regulation of interdigestive gastrointestinal motility and indirectly causes rhythmic contraction of duodenal and colonic smooth muscle. The polypeptide is Motilin (MLN) (Canis lupus familiaris (Dog)).